The following is an 858-amino-acid chain: G2-specific protein kinase nim-1 (858 aa).

Residues 7–290 enclose the Protein kinase domain; sequence YELLEKIGHG…TATLLNLPIV (284 aa). Residues 13–21 and K36 contribute to the ATP site; that span reads IGHGSFGII. The Proton acceptor role is filled by D161. T194 is modified (phosphothreonine; by autocatalysis). A coiled-coil region spans residues 291 to 383; that stretch reads RLMRKEKEVV…QARVEAELQR (93 aa). Disordered stretches follow at residues 495-693 and 747-858; these read TKAP…LPQA and SAVD…LSQS. Basic and acidic residues predominate over residues 516–525; the sequence is SNWEVPRETE. Acidic residues predominate over residues 526–535; sequence MIDSGDESEA. Polar residues-rich tracts occupy residues 548 to 572 and 580 to 598; these read SSKN…NSNV and SKQT…SSIG. The segment covering 636–648 has biased composition (low complexity); it reads SANNINNSSNGGS. The segment covering 650 to 661 has biased composition (polar residues); the sequence is APSSTVTSNITV. The span at 676-691 shows a compositional bias: low complexity; it reads SSFSQQQNNQPQQSLP. Positions 760–780 are enriched in polar residues; the sequence is GQSQLPTRPRSQPQPITANFE. A compositionally biased stretch (low complexity) spans 781–802; that stretch reads QQQQQQQSNTNSISSSNSAGSG.

Belongs to the protein kinase superfamily. CAMK Ser/Thr protein kinase family.

It is found in the nucleus. The catalysed reaction is L-seryl-[protein] + ATP = O-phospho-L-seryl-[protein] + ADP + H(+). It carries out the reaction L-threonyl-[protein] + ATP = O-phospho-L-threonyl-[protein] + ADP + H(+). Protein kinase that plays an important role in mitotic regulation. The protein is G2-specific protein kinase nim-1 (nim-1) of Neurospora crassa (strain ATCC 24698 / 74-OR23-1A / CBS 708.71 / DSM 1257 / FGSC 987).